The sequence spans 99 residues: MPNTKSAARALRRSERRRLRNRMWRSMARTFIKKARKLMEAGDLEAAARVIGDAISTLDRAAAKGAIHKNNAARRKSRLMKRFNALVKARLQQGQEQST.

This sequence belongs to the bacterial ribosomal protein bS20 family.

Its function is as follows. Binds directly to 16S ribosomal RNA. This chain is Small ribosomal subunit protein bS20, found in Thermomicrobium roseum (strain ATCC 27502 / DSM 5159 / P-2).